A 105-amino-acid polypeptide reads, in one-letter code: Large ribosomal subunit protein uL24 (105 aa).

Belongs to the universal ribosomal protein uL24 family. As to quaternary structure, part of the 50S ribosomal subunit.

In terms of biological role, one of two assembly initiator proteins, it binds directly to the 5'-end of the 23S rRNA, where it nucleates assembly of the 50S subunit. Its function is as follows. One of the proteins that surrounds the polypeptide exit tunnel on the outside of the subunit. The polypeptide is Large ribosomal subunit protein uL24 (Saccharophagus degradans (strain 2-40 / ATCC 43961 / DSM 17024)).